Reading from the N-terminus, the 120-residue chain is UPF0102 protein CBU_1742 (120 aa).

Belongs to the UPF0102 family.

The sequence is that of UPF0102 protein CBU_1742 from Coxiella burnetii (strain RSA 493 / Nine Mile phase I).